The sequence spans 459 residues: Probable rhamnogalacturonase C (459 aa).

A signal peptide spans 1–18 (MRASILPLTLFLATLAGA). 5 N-linked (GlcNAc...) asparagine glycosylation sites follow: Asn36, Asn64, Asn77, Asn140, and Asn155. Cys39 and Cys65 are oxidised to a cystine. The Proton donor role is filled by Asp216. A disulfide bridge links Cys218 with Cys235. Asn236 and Asn251 each carry an N-linked (GlcNAc...) asparagine glycan. His290 is an active-site residue. Asn315 is a glycosylation site (N-linked (GlcNAc...) asparagine). Cys337 and Cys343 are joined by a disulfide. Asn356 carries an N-linked (GlcNAc...) asparagine glycan. The cysteines at positions 365 and 374 are disulfide-linked.

Belongs to the glycosyl hydrolase 28 family.

The protein localises to the secreted. In terms of biological role, pectinolytic enzymes consist of four classes of enzymes: pectine lyase, polygalacturonase, pectin methylesterase and rhamnogalacturonase. Hydrolyzes alpha-D-galacturonopyranosyl-(1,2)-alpha-L-rhamnopyranosyl linkages in the backbone of the hairy regions of pectins. This chain is Probable rhamnogalacturonase C (rhgC), found in Aspergillus niger (strain ATCC MYA-4892 / CBS 513.88 / FGSC A1513).